A 237-amino-acid polypeptide reads, in one-letter code: MSTLDATRAELGLVVLYLNKAEARDKICRAIQYGSKFISNGQPGTAQDVDRSTTLARKVFRLLKWVNDLHGLISPPAKGTPLTLVLLGKSKNALLSTFLFLDQFVWLGRTGIYKNKERTDRIVRISLYCWMASSVCAGLVELGELKRLSKSMRKLARELRDTDKYENDQYKSKMKQSDERLLALVKAAMDVVVAVGLLQLSPKKITPRVTGAFGFVTSLISCYQQLPSRAPAIKVKA.

The Cytoplasmic segment spans residues 1-92 (MSTLDATRAE…TLVLLGKSKN (92 aa)). A helical transmembrane segment spans residues 93-113 (ALLSTFLFLDQFVWLGRTGIY). At 114–204 (KNKERTDRIV…VGLLQLSPKK (91 aa)) the chain is on the lumenal side. A helical transmembrane segment spans residues 205–223 (ITPRVTGAFGFVTSLISCY). At 224–237 (QQLPSRAPAIKVKA) the chain is on the cytoplasmic side.

The protein belongs to the peroxin-11 family. As to expression, expressed in seedlings, leaf sheaths, flag leaf, panicles and spikelets.

The protein localises to the peroxisome membrane. Its function is as follows. Involved in peroxisomal proliferation. The protein is Peroxisomal membrane protein 11-1 (PEX11-1) of Oryza sativa subsp. japonica (Rice).